The following is a 354-amino-acid chain: Protein RecA (354 aa).

67-74 serves as a coordination point for ATP; sequence GPESSGKT. A disordered region spans residues 333–354; it reads MNEFVPSSEEQAEASLSEDHDQ.

It belongs to the RecA family.

The protein localises to the cytoplasm. Can catalyze the hydrolysis of ATP in the presence of single-stranded DNA, the ATP-dependent uptake of single-stranded DNA by duplex DNA, and the ATP-dependent hybridization of homologous single-stranded DNAs. It interacts with LexA causing its activation and leading to its autocatalytic cleavage. The sequence is that of Protein RecA from Laribacter hongkongensis (strain HLHK9).